A 219-amino-acid chain; its full sequence is Leukocyte surface antigen CD53 (219 aa).

Topologically, residues 1-11 are cytoplasmic; it reads MGMSSLKLLKY. The chain crosses the membrane as a helical span at residues 12-32; the sequence is VLFFFNLLFWICGCCILGFGI. Residues 33 to 54 are Extracellular-facing; the sequence is YLLIHNNFGVLFHNLPSLTLGN. The chain crosses the membrane as a helical span at residues 55–69; that stretch reads VFVIVGSIIMVVAFL. Topologically, residues 70 to 80 are cytoplasmic; the sequence is GCMGSIKENKC. The chain crosses the membrane as a helical span at residues 81–106; it reads LLMSFFILLLIILLAEVTLAILLFVY. Residues 107–181 are Extracellular-facing; sequence EQKLNEYVAK…AKARLWFHSN (75 aa). 2 N-linked (GlcNAc...) asparagine glycosylation sites follow: Asn-129 and Asn-148. The helical transmembrane segment at 182 to 206 threads the bilayer; it reads FLYIGIITICVCVIEVLGMSFALTL. At 207-219 the chain is on the cytoplasmic side; it reads NCQIDKTSQTIGL.

Belongs to the tetraspanin (TM4SF) family. As to quaternary structure, interacts with SCIMP. Interacts with CD45/PTPRC. Interacts with IL7R. Interacts with RBL2 and PPP2CA. As to expression, B-cells, monocytes, macrophages, neutrophils, single (CD4 or CD8) positive thymocytes and peripheral T-cells.

It localises to the cell membrane. The protein resides in the cell junction. It is found in the membrane. Its subcellular location is the synapse. Structural component of specialized membrane microdomains known as tetraspanin-enriched microdomains (TERMs), which act as platforms for receptor clustering and signaling. Participates thereby in diverse biological functions such as cell signal transduction, adhesion, migration and protein trafficking. Plays a role in the activation of monocytes and B-cells. Acts as an essential regulator of B-cell development by promoting interleukin-7 receptor/IL7R signaling. Also promotes, in B-cells, the BCR signaling by recruiting PKC to the plasma membrane in order to phosphorylate its substrates. Plays an essential role in B- and T-cells homing to lymph nodes by stabilizing L-selectin/SELL cell surface expression. Also mediates metabolic and inflammatory functions in hepatocytes and adipose tissue by promoting TNF-alpha and LPS signaling independent of the immune compartment. This Homo sapiens (Human) protein is Leukocyte surface antigen CD53 (CD53).